Here is a 363-residue protein sequence, read N- to C-terminus: Sulfate/thiosulfate import ATP-binding protein CysA (363 aa).

The ABC transporter domain maps to 3–237 (IEINNISKYF…PATRFVLEFL (235 aa)). Residue 35-42 (GPSGSGKT) participates in ATP binding.

The protein belongs to the ABC transporter superfamily. Sulfate/tungstate importer (TC 3.A.1.6) family. In terms of assembly, the complex is composed of two ATP-binding proteins (CysA), two transmembrane proteins (CysT and CysW) and a solute-binding protein (CysP).

The protein resides in the cell inner membrane. It catalyses the reaction sulfate(out) + ATP + H2O = sulfate(in) + ADP + phosphate + H(+). The enzyme catalyses thiosulfate(out) + ATP + H2O = thiosulfate(in) + ADP + phosphate + H(+). In terms of biological role, part of the ABC transporter complex CysAWTP involved in sulfate/thiosulfate import. Responsible for energy coupling to the transport system. In Yersinia pestis, this protein is Sulfate/thiosulfate import ATP-binding protein CysA.